Consider the following 566-residue polypeptide: Arginine--tRNA ligase (566 aa).

The short motif at Ala121–His131 is the 'HIGH' region element.

This sequence belongs to the class-I aminoacyl-tRNA synthetase family.

Its subcellular location is the cytoplasm. It carries out the reaction tRNA(Arg) + L-arginine + ATP = L-arginyl-tRNA(Arg) + AMP + diphosphate. This Methanococcus maripaludis (strain C5 / ATCC BAA-1333) protein is Arginine--tRNA ligase.